Consider the following 325-residue polypeptide: Tagatose 1,6-diphosphate aldolase 1 (325 aa).

Belongs to the aldolase LacD family.

The catalysed reaction is D-tagatofuranose 1,6-bisphosphate = D-glyceraldehyde 3-phosphate + dihydroxyacetone phosphate. It functions in the pathway carbohydrate metabolism; D-tagatose 6-phosphate degradation; D-glyceraldehyde 3-phosphate and glycerone phosphate from D-tagatose 6-phosphate: step 2/2. This chain is Tagatose 1,6-diphosphate aldolase 1 (lacD1), found in Streptococcus mutans serotype c (strain ATCC 700610 / UA159).